We begin with the raw amino-acid sequence, 281 residues long: MATNFLAHEKIWFDKFKYDDAERRFYEQMNGPVAGASRQENGASVILRDIARARENIQKSLAGSSGPGASSGTSGDHGELVVRIASLEVENQSLRGVVQELQQAISKLEARLNVLEKSSPGHRATAPQTQHVSPMRQVEPPAKKPATPAEDDEDDDIDLFGSDNEEEDKEAAQLREERLRQYAEKKAKKPALVAKSSILLDVKPWDDETDMAQLEACVRSIQLDGLVWGASKLVPVGYGIRKLQIQCVVEDDKVGTDLLEEEITKFEEHVQSVDIAAFNKI.

An N-acetylalanine modification is found at Ala2. An N6-acetyllysine modification is found at Lys17. Ser37, Glu40, Ser44, and Ser60 each carry phosphoserine. Thr73 is modified (phosphothreonine). The segment at 80-115 is leucine-zipper; the sequence is LVVRIASLEVENQSLRGVVQELQQAISKLEARLNVL. A phosphoserine mark is found at Ser86, Asn91, Leu94, and Ser106. Lys107 bears the N6-acetyllysine mark. Lys117 bears the N6-acetyllysine; alternate mark. Position 117 is an N6-succinyllysine; alternate (Lys117). The segment at 118-172 is disordered; that stretch reads SSPGHRATAPQTQHVSPMRQVEPPAKKPATPAEDDEDDDIDLFGSDNEEEDKEAA. Residue Ser119 is modified to Phosphoserine. A Phosphothreonine modification is found at Thr129. Ser133 carries the phosphoserine modification. Thr147 carries the phosphothreonine modification. Residues 149–169 are compositionally biased toward acidic residues; sequence AEDDEDDDIDLFGSDNEEEDK. Residue Ser162 is modified to Phosphoserine; by CK2. The segment at 173-281 is catalytic (GEF); sequence QLREERLRQY…SVDIAAFNKI (109 aa).

This sequence belongs to the EF-1-beta/EF-1-delta family. In terms of assembly, EF-1 is composed of 4 subunits: alpha, beta, delta isoform 1, and gamma. Isoform 2 interacts with HSF1 and NFE2L2. In terms of tissue distribution, isoform 2 is specifically expressed in brain, cerebellum and testis.

Its subcellular location is the nucleus. Functionally, EF-1-beta and EF-1-delta stimulate the exchange of GDP bound to EF-1-alpha to GTP, regenerating EF-1-alpha for another round of transfer of aminoacyl-tRNAs to the ribosome. Regulates induction of heat-shock-responsive genes through association with heat shock transcription factors and direct DNA-binding at heat shock promoter elements (HSE). The polypeptide is Elongation factor 1-delta (EEF1D) (Homo sapiens (Human)).